The following is a 541-amino-acid chain: DNA polymerase epsilon subunit B (541 aa).

Belongs to the DNA polymerase epsilon subunit B family. Heterotetramer. Consists of four subunits: POL2, DPB2, DPB3 and DPB4.

The protein resides in the nucleus. In terms of biological role, as accessory component of the DNA polymerase epsilon (DNA polymerase II) participates in chromosomal DNA replication. This Cryptococcus neoformans var. neoformans serotype D (strain B-3501A) (Filobasidiella neoformans) protein is DNA polymerase epsilon subunit B (DPB2).